A 121-amino-acid polypeptide reads, in one-letter code: Small ribosomal subunit protein bS16 (121 aa).

Basic and acidic residues predominate over residues 97–114; the sequence is LAKAKTKDEENDNSKVES. Residues 97-121 form a disordered region; the sequence is LAKAKTKDEENDNSKVESEGNEAES.

This sequence belongs to the bacterial ribosomal protein bS16 family.

The sequence is that of Small ribosomal subunit protein bS16 from Prochlorococcus marinus (strain AS9601).